Consider the following 255-residue polypeptide: Acetylglutamate kinase (255 aa).

Residues 40–41, R62, and N153 each bind substrate; that span reads GG.

It belongs to the acetylglutamate kinase family. ArgB subfamily.

The protein localises to the cytoplasm. It carries out the reaction N-acetyl-L-glutamate + ATP = N-acetyl-L-glutamyl 5-phosphate + ADP. The protein operates within amino-acid biosynthesis; L-arginine biosynthesis; N(2)-acetyl-L-ornithine from L-glutamate: step 2/4. In terms of biological role, catalyzes the ATP-dependent phosphorylation of N-acetyl-L-glutamate. The polypeptide is Acetylglutamate kinase (Bacillus thuringiensis subsp. konkukian (strain 97-27)).